A 158-amino-acid chain; its full sequence is Small ribosomal subunit protein uS7 (158 aa).

It belongs to the universal ribosomal protein uS7 family. Part of the 30S ribosomal subunit. Contacts proteins S9 and S11.

In terms of biological role, one of the primary rRNA binding proteins, it binds directly to 16S rRNA where it nucleates assembly of the head domain of the 30S subunit. Is located at the subunit interface close to the decoding center, probably blocks exit of the E-site tRNA. This is Small ribosomal subunit protein uS7 from Wolbachia pipientis subsp. Culex pipiens (strain wPip).